Consider the following 134-residue polypeptide: Cytochrome b5 (134 aa).

A Cytochrome b5 heme-binding domain is found at 6-82 (TKTFTRAEVA…MKKYKIGELV (77 aa)). Heme-binding residues include histidine 41 and histidine 65. The segment at 86-105 (RTSVAQKSEPTWSTEQQTEE) is disordered. The segment covering 87–105 (TSVAQKSEPTWSTEQQTEE) has biased composition (polar residues). Residues 111–131 (WLVPLVLCLVATLFYKFFFGG) form a helical membrane-spanning segment.

This sequence belongs to the cytochrome b5 family.

It localises to the endoplasmic reticulum membrane. The protein resides in the microsome membrane. Functionally, cytochrome b5 is a membrane-bound hemoprotein which functions as an electron carrier for several membrane-bound oxygenases. This is Cytochrome b5 (Cyt-b5) from Drosophila melanogaster (Fruit fly).